Consider the following 587-residue polypeptide: Phosphatidylinositol-3-phosphatase SAC1 (587 aa).

The Cytoplasmic segment spans residues 1–520; the sequence is MAATAYEHLK…SPLSVPRDWK (520 aa). Residues 122 to 451 form the SAC domain; it reads LNHVLSTDGF…ANACAKQYAG (330 aa). Positions 452 to 587 are essential for phosphatidylinositol-4-phosphate phosphatase activity; the sequence is TGALKTDFTR…PRLVQKEKID (136 aa). Position 456 is an N6-acetyllysine (Lys-456). A helical membrane pass occupies residues 521-541; that stretch reads FLALPIIMVVAFSMCIICLLM. The Lumenal portion of the chain corresponds to 542-548; that stretch reads AGDTWTE. A helical transmembrane segment spans residues 549–569; it reads TLAYVLFWGVASIGTFFIILY. The Cytoplasmic segment spans residues 570 to 587; the sequence is NGKDFVDAPRLVQKEKID.

As to quaternary structure, interacts with TMEM39A. Interacts with SEC23A and SEC24A; this interaction is reduced in the absence of TMEM39A. Interacts with PLEKHA3 and VAPA and/or VAPB to form a ternary complex. In terms of tissue distribution, detected in spleen, lung, liver, skeletal muscle, kidney, testis and in cerebellar Purkinje cells (at protein level). Ubiquitous. Highly expressed in brain, spleen, liver and kidney.

Its subcellular location is the endoplasmic reticulum membrane. The protein localises to the golgi apparatus membrane. It catalyses the reaction a 1,2-diacyl-sn-glycero-3-phospho-(1D-myo-inositol-3-phosphate) + H2O = a 1,2-diacyl-sn-glycero-3-phospho-(1D-myo-inositol) + phosphate. It carries out the reaction a 1,2-diacyl-sn-glycero-3-phospho-(1D-myo-inositol 4-phosphate) + H2O = a 1,2-diacyl-sn-glycero-3-phospho-(1D-myo-inositol) + phosphate. Phosphoinositide phosphatase which catalyzes the hydrolysis of phosphatidylinositol 4-phosphate (PtdIns(4)P), phosphatidylinositol 3-phosphate (PtdIns(3)P) and has low activity towards phosphatidylinositol-3,5-bisphosphate (PtdIns(3,5)P2). Shows a very robust PtdIns(4)P phosphatase activity when it binds PtdIns(4)P in a 'cis' configuration in the cellular environment, with much less activity seen when it binds PtdIns(4)P in 'trans' configuration. PtdIns(4)P phosphatase activity (when it binds PtdIns(4)P in 'trans' configuration) is enhanced in the presence of PLEKHA3. This chain is Phosphatidylinositol-3-phosphatase SAC1 (Sacm1l), found in Rattus norvegicus (Rat).